We begin with the raw amino-acid sequence, 421 residues long: NADH-quinone oxidoreductase subunit F (421 aa).

54-63 (GRGGAGFSTG) contacts NAD(+). 166–213 (GAGAYICGEETALLESLEGKKGMPRLKPPFPAGFGLYGCPTTINNVES) contributes to the FMN binding site. C344, C347, C350, and C390 together coordinate [4Fe-4S] cluster.

It belongs to the complex I 51 kDa subunit family. FMN is required as a cofactor. The cofactor is [4Fe-4S] cluster.

The catalysed reaction is a quinone + NADH + 5 H(+)(in) = a quinol + NAD(+) + 4 H(+)(out). In terms of biological role, NDH-1 shuttles electrons from NADH, via FMN and iron-sulfur (Fe-S) centers, to quinones in the respiratory chain. Couples the redox reaction to proton translocation (for every two electrons transferred, four hydrogen ions are translocated across the cytoplasmic membrane), and thus conserves the redox energy in a proton gradient. The sequence is that of NADH-quinone oxidoreductase subunit F (nuoF) from Rickettsia conorii (strain ATCC VR-613 / Malish 7).